The following is a 253-amino-acid chain: 5-oxoprolinase subunit A (253 aa).

This sequence belongs to the LamB/PxpA family. In terms of assembly, forms a complex composed of PxpA, PxpB and PxpC.

It carries out the reaction 5-oxo-L-proline + ATP + 2 H2O = L-glutamate + ADP + phosphate + H(+). Catalyzes the cleavage of 5-oxoproline to form L-glutamate coupled to the hydrolysis of ATP to ADP and inorganic phosphate. This is 5-oxoprolinase subunit A from Bacillus anthracis (strain CDC 684 / NRRL 3495).